The following is a 155-amino-acid chain: Transcription antitermination protein NusB (155 aa).

This sequence belongs to the NusB family.

Functionally, involved in transcription antitermination. Required for transcription of ribosomal RNA (rRNA) genes. Binds specifically to the boxA antiterminator sequence of the ribosomal RNA (rrn) operons. The protein is Transcription antitermination protein NusB of Azoarcus sp. (strain BH72).